The sequence spans 300 residues: Glycerol-3-phosphate dehydrogenase [NAD(P)+] (300 aa).

The NADPH site is built by Trp11, Lys33, and Lys79. The sn-glycerol 3-phosphate site is built by Lys79, Gly107, and Ser109. Ala111 serves as a coordination point for NADPH. Residues Lys161, Asp214, Ser224, Arg225, and Asn226 each coordinate sn-glycerol 3-phosphate. Lys161 (proton acceptor) is an active-site residue. Arg225 contributes to the NADPH binding site. NADPH is bound by residues Val249 and Glu251.

Belongs to the NAD-dependent glycerol-3-phosphate dehydrogenase family.

The protein resides in the cytoplasm. It catalyses the reaction sn-glycerol 3-phosphate + NAD(+) = dihydroxyacetone phosphate + NADH + H(+). The catalysed reaction is sn-glycerol 3-phosphate + NADP(+) = dihydroxyacetone phosphate + NADPH + H(+). It participates in membrane lipid metabolism; glycerophospholipid metabolism. Functionally, catalyzes the reduction of the glycolytic intermediate dihydroxyacetone phosphate (DHAP) to sn-glycerol 3-phosphate (G3P), the key precursor for phospholipid synthesis. This is Glycerol-3-phosphate dehydrogenase [NAD(P)+] from Campylobacter lari (strain RM2100 / D67 / ATCC BAA-1060).